The chain runs to 234 residues: Sugar fermentation stimulation protein homolog (234 aa).

It belongs to the SfsA family.

In Shewanella baltica (strain OS155 / ATCC BAA-1091), this protein is Sugar fermentation stimulation protein homolog.